The chain runs to 190 residues: Dynactin subunit 6 (190 aa).

At Thr186 the chain carries Phosphothreonine.

This sequence belongs to the dynactin subunits 5/6 family. Dynactin subunit 6 subfamily. As to quaternary structure, subunit of dynactin, a multiprotein complex part of a tripartite complex with dynein and a adapter, such as BICDL1, BICD2 or HOOK3. The dynactin complex is built around ACTR1A/ACTB filament and consists of an actin-related filament composed of a shoulder domain, a pointed end and a barbed end. Its length is defined by its flexible shoulder domain. The soulder is composed of 2 DCTN1 subunits, 4 DCTN2 and 2 DCTN3. The 4 DCNT2 (via N-terminus) bind the ACTR1A filament and act as molecular rulers to determine the length. The pointed end is important for binding dynein-dynactin cargo adapters. Consists of 4 subunits: ACTR10, DCNT4, DCTN5 and DCTN6. Within the complex DCTN6 forms a heterodimer with DCTN5. The barbed end is composed of a CAPZA1:CAPZB heterodimers, which binds ACTR1A/ACTB filament and dynactin and stabilizes dynactin. Interacts with PLK1. Interacts with N4BP2L1. In terms of processing, phosphorylation at Thr-186 by CDK1 during mitotic prometaphase creates a binding site for PLK1 that facilitates its recruitment to kinetochores.

The protein localises to the cytoplasm. Its subcellular location is the cytoskeleton. It is found in the chromosome. It localises to the centromere. The protein resides in the kinetochore. Its function is as follows. Part of the dynactin complex that activates the molecular motor dynein for ultra-processive transport along microtubules. This chain is Dynactin subunit 6 (DCTN6), found in Sus scrofa (Pig).